A 155-amino-acid polypeptide reads, in one-letter code: Transcriptional repressor NrdR (155 aa).

Residues 1-11 (MECPNCHQNAS) show a composition bias toward polar residues. The segment at 1-22 (MECPNCHQNASRVIDSRPSDEN) is disordered. Residues 3–34 (CPNCHQNASRVIDSRPSDENRAIRRRRECENC) fold into a zinc finger. The ATP-cone domain maps to 49 to 139 (LLVIKNDGTR…IYREFKDMSS (91 aa)).

Belongs to the NrdR family. Zn(2+) serves as cofactor.

In terms of biological role, negatively regulates transcription of bacterial ribonucleotide reductase nrd genes and operons by binding to NrdR-boxes. The polypeptide is Transcriptional repressor NrdR (Lactobacillus helveticus (strain DPC 4571)).